A 79-amino-acid chain; its full sequence is Probable [Fe-S]-dependent transcriptional repressor (79 aa).

Iron-sulfur cluster is bound by residues C56, C61, C64, and C71.

Belongs to the FeoC family.

Its function is as follows. May function as a transcriptional regulator that controls feoABC expression. The chain is Probable [Fe-S]-dependent transcriptional repressor from Klebsiella pneumoniae (strain 342).